The sequence spans 151 residues: Ribosome maturation factor RimP (151 aa).

Belongs to the RimP family.

It localises to the cytoplasm. In terms of biological role, required for maturation of 30S ribosomal subunits. This is Ribosome maturation factor RimP from Pasteurella multocida (strain Pm70).